A 459-amino-acid chain; its full sequence is Putrescine aminotransferase (459 aa).

Residues 150–151 (GT) and glutamine 274 each bind pyridoxal 5'-phosphate. N6-(pyridoxal phosphate)lysine is present on lysine 300. Threonine 332 provides a ligand contact to pyridoxal 5'-phosphate.

This sequence belongs to the class-III pyridoxal-phosphate-dependent aminotransferase family. Putrescine aminotransferase subfamily. It depends on pyridoxal 5'-phosphate as a cofactor.

The catalysed reaction is an alkane-alpha,omega-diamine + 2-oxoglutarate = an omega-aminoaldehyde + L-glutamate. The enzyme catalyses putrescine + 2-oxoglutarate = 1-pyrroline + L-glutamate + H2O. It carries out the reaction cadaverine + 2-oxoglutarate = 5-aminopentanal + L-glutamate. It functions in the pathway amine and polyamine degradation; putrescine degradation; 4-aminobutanal from putrescine (transaminase route): step 1/1. Catalyzes the aminotransferase reaction from putrescine to 2-oxoglutarate, leading to glutamate and 4-aminobutanal, which spontaneously cyclizes to form 1-pyrroline. This is the first step in one of two pathways for putrescine degradation, where putrescine is converted into 4-aminobutanoate (gamma-aminobutyrate or GABA) via 4-aminobutanal. Also functions as a cadaverine transaminase in a a L-lysine degradation pathway to succinate that proceeds via cadaverine, glutarate and L-2-hydroxyglutarate. This chain is Putrescine aminotransferase, found in Salmonella paratyphi B (strain ATCC BAA-1250 / SPB7).